We begin with the raw amino-acid sequence, 469 residues long: GDP-fucose protein O-fucosyltransferase 3 (469 aa).

The Cytoplasmic segment spans residues 1–9; the sequence is MVNRIWEKR. Residues 10–30 form a helical; Signal-anchor for type II membrane protein membrane-spanning segment; it reads FWISCFFIIFLFILVIFQVMV. The Lumenal portion of the chain corresponds to 31–469; the sequence is ELGRFEKKET…EFWNLVFKFW (439 aa). N100, N158, N308, and N333 each carry an N-linked (GlcNAc...) asparagine glycan. C379 and C382 are disulfide-bonded. An N-linked (GlcNAc...) asparagine glycan is attached at N455.

It belongs to the glycosyltransferase 10 family.

The protein resides in the endoplasmic reticulum membrane. It catalyses the reaction L-threonyl-[protein] + GDP-beta-L-fucose = 3-O-(alpha-L-fucosyl)-L-threonyl-[protein] + GDP + H(+). The catalysed reaction is L-seryl-[protein] + GDP-beta-L-fucose = 3-O-(alpha-L-fucosyl)-L-seryl-[protein] + GDP + H(+). The protein operates within protein modification; protein glycosylation. Its function is as follows. Protein O-fucosyltransferase that specifically catalyzes O-fucosylation of serine or threonine residues in EMI domains of target proteins. Attaches fucose through an O-glycosidic linkage. O-fucosylation of EMI domain-containing proteins may be required for facilitating protein folding and secretion. The sequence is that of GDP-fucose protein O-fucosyltransferase 3 (fut10) from Xenopus laevis (African clawed frog).